Reading from the N-terminus, the 177-residue chain is Deoxyuridine 5'-triphosphate nucleotidohydrolase (177 aa).

Substrate-binding positions include 83 to 85 (RSG), Asn-96, 100 to 102 (TID), and Lys-110. Residues 150 to 163 (DLTSSQTDLSNQPN) show a composition bias toward polar residues. The tract at residues 150 to 177 (DLTSSQTDLSNQPNTGRGTGGFGSTGQK) is disordered. The span at 166 to 177 (RGTGGFGSTGQK) shows a compositional bias: gly residues.

The protein belongs to the dUTPase family. Mg(2+) serves as cofactor.

The catalysed reaction is dUTP + H2O = dUMP + diphosphate + H(+). It participates in pyrimidine metabolism; dUMP biosynthesis; dUMP from dCTP (dUTP route): step 2/2. Functionally, this enzyme is involved in nucleotide metabolism: it produces dUMP, the immediate precursor of thymidine nucleotides and it decreases the intracellular concentration of dUTP so that uracil cannot be incorporated into DNA. In Bartonella bacilliformis (strain ATCC 35685 / KC583 / Herrer 020/F12,63), this protein is Deoxyuridine 5'-triphosphate nucleotidohydrolase.